A 121-amino-acid chain; its full sequence is MRHYEIVLLVHPDQSEQVPAMLERYKTLVTAANGKVHRVEDWGRFQLAYMINKLAKAHYLCLNIECSKETLAEIETGFRFNDAVLRHLTVKRDKAETGPSAVMKRVEKEEARKSSQQETAA.

The segment at 94 to 121 (KAETGPSAVMKRVEKEEARKSSQQETAA) is disordered. A compositionally biased stretch (basic and acidic residues) spans 104–115 (KRVEKEEARKSS).

The protein belongs to the bacterial ribosomal protein bS6 family.

Binds together with bS18 to 16S ribosomal RNA. The chain is Small ribosomal subunit protein bS6 from Leptothrix cholodnii (strain ATCC 51168 / LMG 8142 / SP-6) (Leptothrix discophora (strain SP-6)).